The primary structure comprises 355 residues: Holliday junction branch migration complex subunit RuvB (355 aa).

The segment at 1–43 (MEEMDDFTVRRGEREDITGAAGPPEERPLDPAAFEEDDEPTLR) is disordered. The tract at residues 4-203 (MDDFTVRRGE…FGFSARLDYY (200 aa)) is large ATPase domain (RuvB-L). The segment covering 7–17 (FTVRRGEREDI) has biased composition (basic and acidic residues). Residues Leu-42, Arg-43, Gly-84, Lys-87, Thr-88, Ser-89, 150 to 152 (EDF), Arg-193, Tyr-203, and Arg-240 each bind ATP. Residue Thr-88 participates in Mg(2+) binding. Positions 204-274 (EPHELEKIVV…TANAALEMQG (71 aa)) are small ATPAse domain (RuvB-S). The head domain (RuvB-H) stretch occupies residues 277-355 (HLGLDRTDRE…HLGFPVRDGG (79 aa)). DNA is bound by residues Arg-313, Arg-332, and Arg-337.

It belongs to the RuvB family. As to quaternary structure, homohexamer. Forms an RuvA(8)-RuvB(12)-Holliday junction (HJ) complex. HJ DNA is sandwiched between 2 RuvA tetramers; dsDNA enters through RuvA and exits via RuvB. An RuvB hexamer assembles on each DNA strand where it exits the tetramer. Each RuvB hexamer is contacted by two RuvA subunits (via domain III) on 2 adjacent RuvB subunits; this complex drives branch migration. In the full resolvosome a probable DNA-RuvA(4)-RuvB(12)-RuvC(2) complex forms which resolves the HJ.

It is found in the cytoplasm. The catalysed reaction is ATP + H2O = ADP + phosphate + H(+). In terms of biological role, the RuvA-RuvB-RuvC complex processes Holliday junction (HJ) DNA during genetic recombination and DNA repair, while the RuvA-RuvB complex plays an important role in the rescue of blocked DNA replication forks via replication fork reversal (RFR). RuvA specifically binds to HJ cruciform DNA, conferring on it an open structure. The RuvB hexamer acts as an ATP-dependent pump, pulling dsDNA into and through the RuvAB complex. RuvB forms 2 homohexamers on either side of HJ DNA bound by 1 or 2 RuvA tetramers; 4 subunits per hexamer contact DNA at a time. Coordinated motions by a converter formed by DNA-disengaged RuvB subunits stimulates ATP hydrolysis and nucleotide exchange. Immobilization of the converter enables RuvB to convert the ATP-contained energy into a lever motion, pulling 2 nucleotides of DNA out of the RuvA tetramer per ATP hydrolyzed, thus driving DNA branch migration. The RuvB motors rotate together with the DNA substrate, which together with the progressing nucleotide cycle form the mechanistic basis for DNA recombination by continuous HJ branch migration. Branch migration allows RuvC to scan DNA until it finds its consensus sequence, where it cleaves and resolves cruciform DNA. The sequence is that of Holliday junction branch migration complex subunit RuvB from Rubrobacter xylanophilus (strain DSM 9941 / JCM 11954 / NBRC 16129 / PRD-1).